A 268-amino-acid chain; its full sequence is LOB domain-containing protein 22 (268 aa).

The disordered stretch occupies residues 1 to 31 (MPSGKPSSVFPLHPKPTPLKPSSSTSSSNNN). A compositionally biased stretch (low complexity) spans 22-31 (SSSTSSSNNN). The LOB domain maps to 35-136 (QACAACKYQR…NELEIVLQQL (102 aa)).

Belongs to the LOB domain-containing protein family.

The sequence is that of LOB domain-containing protein 22 (LBD22) from Arabidopsis thaliana (Mouse-ear cress).